A 134-amino-acid chain; its full sequence is Transcription antitermination protein NusB (134 aa).

It belongs to the NusB family.

Functionally, involved in transcription antitermination. Required for transcription of ribosomal RNA (rRNA) genes. Binds specifically to the boxA antiterminator sequence of the ribosomal RNA (rrn) operons. The sequence is that of Transcription antitermination protein NusB from Syntrophomonas wolfei subsp. wolfei (strain DSM 2245B / Goettingen).